Here is a 783-residue protein sequence, read N- to C-terminus: B-cell scaffold protein with ankyrin repeats (783 aa).

The tract at residues 1–154 is interaction with ITPR2; it reads MLPVASGTRG…GYISVIRQIL (154 aa). Positions 25 to 153 constitute a TIR domain; sequence NAKDILLLYE…DGYISVIRQI (129 aa). Positions 199–326 constitute a DBB domain; the sequence is VLPGEIPCEK…EIPYYEFKHL (128 aa). ANK repeat units follow at residues 341–370 and 377–407; these read ELPT…ATRA and DGSD…NTGR. Disordered regions lie at residues 422–521, 538–586, 604–624, and 641–670; these read FSTY…AASQ, MERS…EDNE, SFII…PPKE, and RQSD…STRD. Residues 444–479 show a composition bias toward basic and acidic residues; sequence RNTDRSEEPERSVEMKEEEAGAEARRSLSEGERESS. Over residues 505–515 the composition is skewed to pro residues; it reads HCRPPLLPPRP. A compositionally biased stretch (basic and acidic residues) spans 549 to 565; sequence ARPETREESSREEKKEE. A compositionally biased stretch (acidic residues) spans 566 to 586; that stretch reads AQEEEEEEENPYAFAETEDNE. Residues 610 to 620 are compositionally biased toward pro residues; it reads PPAPTPRPTHI. The span at 641-660 shows a compositional bias: basic and acidic residues; that stretch reads RQSDGDKFYSLPKKPDKTRM. At Tyr649 the chain carries Phosphotyrosine.

As to quaternary structure, interacts with LYN, ITPR1 and ITPR2. Phosphorylated on tyrosines upon BCR activation. As to expression, specifically expressed in spleen. Highly expressed in immature B-cells and recirculating B-cells, and at low levels in pro-B and pre-B cells.

Its function is as follows. Involved in B-cell receptor (BCR)-induced Ca(2+) mobilization from intracellular stores. Promotes Lyn-mediated phosphorylation of IP3 receptors 1 and 2. This Mus musculus (Mouse) protein is B-cell scaffold protein with ankyrin repeats (Bank1).